The following is a 1443-amino-acid chain: DNA polymerase III PolC-type (1443 aa).

Positions 408–567 (FVIFDIETTG…YDTQALKKVF (160 aa)) constitute an Exonuclease domain.

Belongs to the DNA polymerase type-C family. PolC subfamily.

Its subcellular location is the cytoplasm. It carries out the reaction DNA(n) + a 2'-deoxyribonucleoside 5'-triphosphate = DNA(n+1) + diphosphate. Required for replicative DNA synthesis. This DNA polymerase also exhibits 3' to 5' exonuclease activity. This Mycoplasma pneumoniae (strain ATCC 29342 / M129 / Subtype 1) (Mycoplasmoides pneumoniae) protein is DNA polymerase III PolC-type.